We begin with the raw amino-acid sequence, 203 residues long: Small ribosomal subunit protein uS4 (203 aa).

An S4 RNA-binding domain is found at 93-156 (RRLDNVVYRL…LKVPAILEAV (64 aa)).

Belongs to the universal ribosomal protein uS4 family. In terms of assembly, part of the 30S ribosomal subunit. Contacts protein S5. The interaction surface between S4 and S5 is involved in control of translational fidelity.

Functionally, one of the primary rRNA binding proteins, it binds directly to 16S rRNA where it nucleates assembly of the body of the 30S subunit. With S5 and S12 plays an important role in translational accuracy. The chain is Small ribosomal subunit protein uS4 from Streptococcus gordonii (strain Challis / ATCC 35105 / BCRC 15272 / CH1 / DL1 / V288).